A 661-amino-acid polypeptide reads, in one-letter code: UvrABC system protein B (661 aa).

Residues 24–209 (NGLNKGYRFQ…IFPSYQDEGI (186 aa)) enclose the Helicase ATP-binding domain. 37 to 44 (GVTGSGKT) is a binding site for ATP. The short motif at 90-113 (YYDYYQPEAYVPTKDLYIEKSADI) is the Beta-hairpin element. Residues 430-594 (DLVNEIVQVK…IIKPLMEDIF (165 aa)) enclose the Helicase C-terminal domain. A UVR domain is found at 622–657 (EEYAALLEEEMYKAASELRYEDAARLRDELFKIKEE).

The protein belongs to the UvrB family. In terms of assembly, forms a heterotetramer with UvrA during the search for lesions. Interacts with UvrC in an incision complex.

Its subcellular location is the cytoplasm. Functionally, the UvrABC repair system catalyzes the recognition and processing of DNA lesions. A damage recognition complex composed of 2 UvrA and 2 UvrB subunits scans DNA for abnormalities. Upon binding of the UvrA(2)B(2) complex to a putative damaged site, the DNA wraps around one UvrB monomer. DNA wrap is dependent on ATP binding by UvrB and probably causes local melting of the DNA helix, facilitating insertion of UvrB beta-hairpin between the DNA strands. Then UvrB probes one DNA strand for the presence of a lesion. If a lesion is found the UvrA subunits dissociate and the UvrB-DNA preincision complex is formed. This complex is subsequently bound by UvrC and the second UvrB is released. If no lesion is found, the DNA wraps around the other UvrB subunit that will check the other stand for damage. The protein is UvrABC system protein B of Fervidobacterium nodosum (strain ATCC 35602 / DSM 5306 / Rt17-B1).